The following is a 229-amino-acid chain: Endonuclease V (229 aa).

Aspartate 46 and aspartate 114 together coordinate Mg(2+).

Belongs to the endonuclease V family. Mg(2+) serves as cofactor.

It localises to the cytoplasm. The enzyme catalyses Endonucleolytic cleavage at apurinic or apyrimidinic sites to products with a 5'-phosphate.. In terms of biological role, DNA repair enzyme involved in the repair of deaminated bases. Selectively cleaves double-stranded DNA at the second phosphodiester bond 3' to a deoxyinosine leaving behind the intact lesion on the nicked DNA. This chain is Endonuclease V, found in Streptomyces avermitilis (strain ATCC 31267 / DSM 46492 / JCM 5070 / NBRC 14893 / NCIMB 12804 / NRRL 8165 / MA-4680).